Here is a 473-residue protein sequence, read N- to C-terminus: Protein translocase subunit SecA (473 aa).

An ATP-binding site is contributed by aspartate 127. Residues 424–447 are disordered; sequence VAEGKAVHQDTSKQEPKKKQPIRK. 4 residues coordinate Zn(2+): cysteine 457, cysteine 459, cysteine 468, and cysteine 469.

Belongs to the SecA family. In terms of assembly, monomer and homodimer. Part of the essential Sec protein translocation apparatus which comprises SecA, SecYEG and auxiliary proteins SecDF. Other proteins may also be involved. The cofactor is Zn(2+).

The protein localises to the cell membrane. It is found in the cytoplasm. It catalyses the reaction ATP + H2O + cellular proteinSide 1 = ADP + phosphate + cellular proteinSide 2.. In terms of biological role, part of the Sec protein translocase complex. Interacts with the SecYEG preprotein conducting channel. Has a central role in coupling the hydrolysis of ATP to the transfer of proteins into and across the cell membrane, serving as an ATP-driven molecular motor driving the stepwise translocation of polypeptide chains across the membrane. This Cytobacillus firmus (Bacillus firmus) protein is Protein translocase subunit SecA.